The sequence spans 417 residues: UDP-N-acetylglucosamine 1-carboxyvinyltransferase (417 aa).

K22 to N23 contacts phosphoenolpyruvate. Position 92 (R92) interacts with UDP-N-acetyl-alpha-D-glucosamine. C116 acts as the Proton donor in catalysis. The residue at position 116 (C116) is a 2-(S-cysteinyl)pyruvic acid O-phosphothioketal. UDP-N-acetyl-alpha-D-glucosamine-binding residues include D304 and I326.

The protein belongs to the EPSP synthase family. MurA subfamily.

Its subcellular location is the cytoplasm. It catalyses the reaction phosphoenolpyruvate + UDP-N-acetyl-alpha-D-glucosamine = UDP-N-acetyl-3-O-(1-carboxyvinyl)-alpha-D-glucosamine + phosphate. Its pathway is cell wall biogenesis; peptidoglycan biosynthesis. Functionally, cell wall formation. Adds enolpyruvyl to UDP-N-acetylglucosamine. This chain is UDP-N-acetylglucosamine 1-carboxyvinyltransferase, found in Desulfosudis oleivorans (strain DSM 6200 / JCM 39069 / Hxd3) (Desulfococcus oleovorans).